The chain runs to 637 residues: Chaperone protein HtpG (637 aa).

Positions 1–335 are a; substrate-binding; that stretch reads MQGTVNSERL…SSDLPLNISR (335 aa). Residues 336-559 are b; the sequence is ETLQNNKIIE…DGSMDIRMER (224 aa). The c stretch occupies residues 560 to 637; the sequence is FLREQKQLNY…RMNNVLSQIN (78 aa).

The protein belongs to the heat shock protein 90 family. As to quaternary structure, homodimer.

The protein resides in the cytoplasm. In terms of biological role, molecular chaperone. Has ATPase activity. The polypeptide is Chaperone protein HtpG (Ehrlichia ruminantium (strain Welgevonden)).